The following is a 430-amino-acid chain: Tektin-2 (430 aa).

2 coiled-coil regions span residues 75–162 and 226–380; these read KEML…FQHL and KNRA…IACK.

Belongs to the tektin family. In terms of assembly, microtubule inner protein component of sperm flagellar doublet microtubules. May interact with CCDC172. Post-translationally, tyrosine phosphorylated. Ubiquitinated, leading to its degradation. Deubiquitinated by USP16, promoting its stability.

It localises to the cytoplasm. Its subcellular location is the cytoskeleton. The protein localises to the cilium axoneme. The protein resides in the flagellum axoneme. It is found in the microtubule organizing center. In terms of biological role, microtubule inner protein (MIP) part of the dynein-decorated doublet microtubules (DMTs) in cilia and flagellar axoneme. Plays a key role in the assembly or attachment of the inner dynein arm to microtubules in sperm flagella and tracheal cilia. Forms filamentous polymers in the walls of ciliary and flagellar microtubules. This chain is Tektin-2 (Tekt2), found in Rattus norvegicus (Rat).